A 585-amino-acid polypeptide reads, in one-letter code: MNVFKNFEKKIKKSLESSDIKGKNGEDLDLSKITVDPPRDSSHGHLSTNAAMVLAKSTGLNPRALAEKIIELLKNDPSVESINVAGPGFINIKLTKPFWQDLIKSMLEKGISYGRIPMGQGKRINVEYVSANPTGPMHVGHCRGAVVGDVLSNLLQFVGYNITKEYYINDAGKQIEVLAHSVLLRYREALGQKINEIPEGLYPGEYLIPLGQSLAQEFGDKLLTIDKEEALSIVKERAIHEMMSMIRKDLAALNIYHDIFFSERMLYADNARAIRNTINDLTLKGYIYKGKLPPPKGQNTEDWEPCEQTLFRSTDVGDDQDRVLIKSDGSYTYFAADVAYFRDKFNRHFDEMIYILGADHAGYVKRLEAMAKAISNDKAKLSVFLCQLVKLFRNGHPVRMSKRAGSFVTLRDVVEEVGSDPVRFMMLYRKCEAPLDFDFAKVTEQSKDNPIFYVQYASARCHSVFRQAQETLCIENISNDKIIEHLNRLTDDNEIFLIRKLSEYPRIIEQAVVHKEPHRLAFYLYDLASSFHTHWNKGSDNLNLRFIQPDDRNLSFARLGLIQAIMNILSSGLAIVGIKAATEMR.

Residues 131–141 (ANPTGPMHVGH) carry the 'HIGH' region motif.

It belongs to the class-I aminoacyl-tRNA synthetase family. In terms of assembly, monomer.

It localises to the cytoplasm. It catalyses the reaction tRNA(Arg) + L-arginine + ATP = L-arginyl-tRNA(Arg) + AMP + diphosphate. The sequence is that of Arginine--tRNA ligase from Bartonella henselae (strain ATCC 49882 / DSM 28221 / CCUG 30454 / Houston 1) (Rochalimaea henselae).